We begin with the raw amino-acid sequence, 103 residues long: Large ribosomal subunit protein bL21 (103 aa).

This sequence belongs to the bacterial ribosomal protein bL21 family. Part of the 50S ribosomal subunit. Contacts protein L20.

This protein binds to 23S rRNA in the presence of protein L20. This Bordetella parapertussis (strain 12822 / ATCC BAA-587 / NCTC 13253) protein is Large ribosomal subunit protein bL21.